A 1265-amino-acid polypeptide reads, in one-letter code: Protein transport protein SEC31 (1265 aa).

WD repeat units follow at residues 6 to 46, 61 to 105, 116 to 156, 162 to 202, 209 to 252, 256 to 296, and 299 to 339; these read EIAR…ELWD, TVDN…KTKD, KHTG…EPFA, TPMD…EVLH, GGRA…APEK, GHKK…KLGE, and TTAN…PSVS. A WD 8; interaction with SEC13 repeat occupies 380 to 403; the sequence is SFGFGSKLVIINTDSSGKSTVKVD. Positions 457–480 are enriched in basic and acidic residues; that stretch reads KESLFEDANNDEKEATSPETKKEN. 3 disordered regions span residues 457 to 485, 765 to 784, and 793 to 1163; these read KESLFEDANNDEKEATSPETKKENGEDDF, VKSSANAKIAKPASSSGQTR, and PAYA…IPEN. The span at 794–810 shows a compositional bias: pro residues; sequence AYAPPVQAPPVQAPQPP. Composition is skewed to low complexity over residues 811–824, 865–875, 901–931, 939–951, and 969–987; these read LVQQQQQQQQQQQP, TPSSLSGTTSG, AKTAAPRRAAAAATPPVSTPTPVSAPAFGSP, SQPGSVGSVSSAG, and SISRSTSRTTVPTSSTVPA. The segment covering 1004-1023 has biased composition (polar residues); that stretch reads SDASQPPSSGFASPTLNSSP. 2 stretches are compositionally biased toward pro residues: residues 1062-1071 and 1083-1101; these read YAPPKNPYAV and APPPPAPKLGSAAPPPPQP.

The protein belongs to the WD repeat SEC31 family. The COPII coat is composed of at least 5 proteins: the SEC23/24 complex, the SEC13/31 complex, and the protein SAR1. SEC13 and SEC31 make a 2:2 tetramer that forms the edge element of the COPII outer coat. The tetramer self-assembles in multiple copies to form the complete polyhedral cage. Interacts (via WD 8) with SEC13.

It is found in the cytoplasmic vesicle. It localises to the COPII-coated vesicle membrane. The protein localises to the endoplasmic reticulum membrane. Component of the coat protein complex II (COPII) which promotes the formation of transport vesicles from the endoplasmic reticulum (ER). The coat has two main functions, the physical deformation of the endoplasmic reticulum membrane into vesicles and the selection of cargo molecules. The chain is Protein transport protein SEC31 (PGA63) from Candida albicans (strain SC5314 / ATCC MYA-2876) (Yeast).